Reading from the N-terminus, the 282-residue chain is Snake venom serine protease BmSP (282 aa).

The N-terminal stretch at 1 to 18 (MVLIGVLASLLILQLSYS) is a signal peptide. Residues 19 to 56 (KSLDDGAKESAYDDEIQQSSWGNSTVNTTLTETVVIQL) constitute a propeptide that is removed on maturation. N-linked (GlcNAc...) asparagine glycosylation is found at N41 and N45. Residues 57-280 (IMGGSECYKS…YIDWIKGIIA (224 aa)) enclose the Peptidase S1 domain. Cystine bridges form between C63–C195, C82–C98, C174–C241, C206–C220, and C231–C256. H97 (charge relay system) is an active-site residue. N135 carries N-linked (GlcNAc...) asparagine glycosylation. Catalysis depends on D142, which acts as the Charge relay system. Residues N149 and N153 are each glycosylated (N-linked (GlcNAc...) asparagine). The active-site Charge relay system is the S235.

Belongs to the peptidase S1 family. Snake venom subfamily. As to quaternary structure, monomer. Expressed by the venom gland.

It is found in the secreted. Its function is as follows. Snake venom serine protease that may act in the hemostasis system of the prey. The protein is Snake venom serine protease BmSP of Bungarus multicinctus (Many-banded krait).